Here is a 498-residue protein sequence, read N- to C-terminus: Histone-lysine N-methyltransferase SET5 (498 aa).

Positions 68–94 (KPNDGCTSRSTSCPGGKKKKKSKTDTS) are disordered. The SET domain maps to 108 to 415 (AGIRGVYFDP…PDDELVISYI (308 aa)).

The protein belongs to the class V-like SAM-binding methyltransferase superfamily. Histone-lysine methyltransferase family. SET5 subfamily.

It localises to the nucleus. It is found in the chromosome. The protein resides in the cytoplasm. The enzyme catalyses L-lysyl-[histone] + S-adenosyl-L-methionine = N(6)-methyl-L-lysyl-[histone] + S-adenosyl-L-homocysteine + H(+). Functionally, histone methyltransferase that monomethylates 'Lys-5', 'Lys-8' and 'Lys-12' of histone H4 (H4K5me1, H4K8me1 and H4K12me1, respectively), thereby controlling gene expression and remodeling chromatin structures. The sequence is that of Histone-lysine N-methyltransferase SET5 (SET5) from Mycosarcoma maydis (Corn smut fungus).